The following is a 678-amino-acid chain: Beta-catenin-like protein hmp-2 (678 aa).

ARM repeat units follow at residues 153 to 192 (RGGPLLIFRSGGLAEIIRMLYDSLESVVHYAVTTLRNLLM), 280 to 319 (PSNKPALISLGCLPALYVELCTAKDERSQTAILVAMRNLS), 320 to 359 (DSATNEENLTQLIIKLLEIIRVANDGMTACACGTLSNLTC), 362 to 403 (TRNK…HCTA), and 409 to 448 (EEAQSELRFCQAFPVILDQLETLRTPVIKAALGVIRNSAL).

The protein belongs to the beta-catenin family. In terms of assembly, component of a core catenin-cadherin complex consisting of hmr-1, hmp-1 and hmp-2; the complex localizes to adherens junctions. Interacts with hmr-1; the interaction is direct. May interact with hmp-1. Interacts with frk-1. Epidermal cells.

It is found in the cell junction. Its subcellular location is the adherens junction. Required for cell migration during body enclosure and cell shape changes during body elongation. Plays a role in recruitment of the cadherin protein hmr-1 to adherens junctions. The sequence is that of Beta-catenin-like protein hmp-2 (hmp-2) from Caenorhabditis elegans.